Here is a 385-residue protein sequence, read N- to C-terminus: 1-deoxy-D-xylulose 5-phosphate reductoisomerase (385 aa).

NADPH-binding residues include threonine 10, glycine 11, serine 12, isoleucine 13, and asparagine 124. A 1-deoxy-D-xylulose 5-phosphate-binding site is contributed by lysine 125. NADPH is bound at residue glutamate 126. Aspartate 150 lines the Mn(2+) pocket. Serine 151, glutamate 152, serine 176, and histidine 199 together coordinate 1-deoxy-D-xylulose 5-phosphate. Glutamate 152 contributes to the Mn(2+) binding site. NADPH is bound at residue glycine 205. 1-deoxy-D-xylulose 5-phosphate contacts are provided by serine 212, asparagine 217, lysine 218, and glutamate 221. A Mn(2+)-binding site is contributed by glutamate 221.

The protein belongs to the DXR family. Mg(2+) serves as cofactor. It depends on Mn(2+) as a cofactor.

It carries out the reaction 2-C-methyl-D-erythritol 4-phosphate + NADP(+) = 1-deoxy-D-xylulose 5-phosphate + NADPH + H(+). It participates in isoprenoid biosynthesis; isopentenyl diphosphate biosynthesis via DXP pathway; isopentenyl diphosphate from 1-deoxy-D-xylulose 5-phosphate: step 1/6. Catalyzes the NADPH-dependent rearrangement and reduction of 1-deoxy-D-xylulose-5-phosphate (DXP) to 2-C-methyl-D-erythritol 4-phosphate (MEP). The polypeptide is 1-deoxy-D-xylulose 5-phosphate reductoisomerase (Clostridium botulinum (strain Alaska E43 / Type E3)).